Here is a 118-residue protein sequence, read N- to C-terminus: MSIKYSNKINKIRTFALSLVFIGLFIAYLGVFFRENIIIMTTFMMVGFLAVIASTVVYFWIGMLSTKTVQIICPSCDKPTKMLGRVDACMHCNQPLTMDRDLEGKEFDEKYNKKSYKS.

A run of 2 helical transmembrane segments spans residues 12–32 (IRTF…LGVF) and 43–63 (FMMV…WIGM).

This sequence belongs to the UPF0295 family.

The protein localises to the cell membrane. This Bacillus anthracis protein is UPF0295 protein BA_0538/GBAA_0538/BAS0506.